The primary structure comprises 286 residues: Large ribosomal subunit protein uL3 (286 aa).

An N5-methylglutamine modification is found at Q152. Low complexity predominate over residues 246 to 265 (EAAAAAAAAEEQAAMEAAEA). A disordered region spans residues 246–286 (EAAAAAAAAEEQAAMEAAEAAEAKTDTVAEAEAAEKKEGDA). Basic and acidic residues predominate over residues 266 to 286 (AEAKTDTVAEAEAAEKKEGDA).

Belongs to the universal ribosomal protein uL3 family. In terms of assembly, part of the 50S ribosomal subunit. Forms a cluster with proteins L14 and L19. In terms of processing, methylated by PrmB.

Functionally, one of the primary rRNA binding proteins, it binds directly near the 3'-end of the 23S rRNA, where it nucleates assembly of the 50S subunit. This Roseobacter denitrificans (strain ATCC 33942 / OCh 114) (Erythrobacter sp. (strain OCh 114)) protein is Large ribosomal subunit protein uL3.